The primary structure comprises 438 residues: Glutamate-1-semialdehyde 2,1-aminomutase (438 aa).

Residue Lys272 is modified to N6-(pyridoxal phosphate)lysine.

It belongs to the class-III pyridoxal-phosphate-dependent aminotransferase family. HemL subfamily. In terms of assembly, homodimer. Pyridoxal 5'-phosphate serves as cofactor.

The protein localises to the cytoplasm. The enzyme catalyses (S)-4-amino-5-oxopentanoate = 5-aminolevulinate. Its pathway is porphyrin-containing compound metabolism; protoporphyrin-IX biosynthesis; 5-aminolevulinate from L-glutamyl-tRNA(Glu): step 2/2. It functions in the pathway porphyrin-containing compound metabolism; chlorophyll biosynthesis. The chain is Glutamate-1-semialdehyde 2,1-aminomutase from Chloroflexus aggregans (strain MD-66 / DSM 9485).